Consider the following 256-residue polypeptide: CNMALADIVRLPPASEAPFAPLGAPRDLSGPPSKLAVRPWGGADLPGPGLQLLHGTTTLAFKFAHGVVVAVDSRATAGSYIASQTVQKVIEINPSLLGTMAGGAADCSFWERLLARQCRVYELRNKEPISVAAASKLLANMVYQYKGMGLSMGTMICGWDKRGPGLYYVDSEGTRIPGEAFAVGSGSSYAYGVLDGGRRPDMATDEALELARRAIFQAARRDAYSGGSVTVYHVGPRGWRRVSSHDVAGLHDGYGG.

Positions 1–55 (CNMALADIVRLPPASEAPFAPLGAPRDLSGPPSKLAVRPWGGADLPGPGLQLLHG) are cleaved as a propeptide — removed in mature form. The active-site Nucleophile is T56.

The protein belongs to the peptidase T1B family. As to quaternary structure, the 26S proteasome consists of a 20S proteasome core and two 19S regulatory subunits. The 20S proteasome core is a barrel-shaped complex made of 28 subunits that are arranged in four stacked rings. The two outer rings are each formed by seven alpha subunits, and the two inner rings are formed by seven beta subunits. The proteolytic activity is exerted by three beta-subunits PSMB5, PSMB6 and PSMB7. Directly interacts with POMP. Interacts with ABCB1 and TAP1.

The protein resides in the cytoplasm. Its subcellular location is the nucleus. It catalyses the reaction Cleavage of peptide bonds with very broad specificity.. Its function is as follows. Component of the 20S core proteasome complex involved in the proteolytic degradation of most intracellular proteins. This complex plays numerous essential roles within the cell by associating with different regulatory particles. Associated with two 19S regulatory particles, forms the 26S proteasome and thus participates in the ATP-dependent degradation of ubiquitinated proteins. The 26S proteasome plays a key role in the maintenance of protein homeostasis by removing misfolded or damaged proteins that could impair cellular functions, and by removing proteins whose functions are no longer required. Associated with the PA200 or PA28, the 20S proteasome mediates ubiquitin-independent protein degradation. This type of proteolysis is required in several pathways including spermatogenesis (20S-PA200 complex) or generation of a subset of MHC class I-presented antigenic peptides (20S-PA28 complex). Within the 20S core complex, PSMB5 displays a chymotrypsin-like activity. In Gallus gallus (Chicken), this protein is Proteasome subunit beta type-5 (PSMB5).